Reading from the N-terminus, the 458-residue chain is Flavohemoprotein (458 aa).

In terms of domain architecture, Globin spans 2 to 158 (TLSEDTLRAV…LADLFIKREE (157 aa)). Residue histidine 107 coordinates heme b. Catalysis depends on charge relay system residues tyrosine 117 and glutamate 157. The tract at residues 169-457 (GGWRQTRTFR…FEMFGPFKAS (289 aa)) is reductase. In terms of domain architecture, FAD-binding FR-type spans 172 to 279 (RQTRTFRVEE…APPYGDFFLR (108 aa)). FAD contacts are provided by residues tyrosine 211 and 228 to 231 (RQYS). Residue 321-326 (GIGQTP) coordinates NADP(+). 450 to 453 (MFGP) lines the FAD pocket.

Belongs to the globin family. Two-domain flavohemoproteins subfamily. This sequence in the C-terminal section; belongs to the flavoprotein pyridine nucleotide cytochrome reductase family. In terms of assembly, monomer. Heme b is required as a cofactor. The cofactor is FAD.

The enzyme catalyses 2 nitric oxide + NADPH + 2 O2 = 2 nitrate + NADP(+) + H(+). It catalyses the reaction 2 nitric oxide + NADH + 2 O2 = 2 nitrate + NAD(+) + H(+). Flavohemoprotein involved in nitric oxide (NO) detoxification in an aerobic process, termed nitric oxide dioxygenase (NOD) reaction that utilizes O(2) and NAD(P)H to convert NO to nitrate, which protects the protozoan parasite from various noxious nitrogen compounds. Therefore, plays a central role in the inducible response to nitrosative stress. May also be involved in O(2) detoxification. The protein is Flavohemoprotein (hmpA) of Giardia intestinalis (strain ATCC 50803 / WB clone C6) (Giardia lamblia).